The primary structure comprises 414 residues: MTENNNLVTSTQGIIKEALHKLGFDEGMYDLIKEPLRMLQVRIPVRMDDGTVKTFTGYRAQHNDAVGPTKGGVRFHPDVDEEEVKALSMWMTLKCGIVNLPYGGGKGGIVCDPRQMSIHEVERLSRGYVRAISQFVGPNKDIPAPDVFTNSQIMAWMMDEYSALDKFNSPGFITGKPIVLGGSHGRDRSTALGVVIAIEQAAKRRNMQIEGAKVVIQGFGNAGSFLAKFLYDLGAKIVGISDAYGALHDPNGLDIDYLLDRRDSFGTVTNLFEETISNKELFELDCDILVPAAISNQITEDNAHDIKASIVVEAANGPTTPEATRILTERGILLVPDVLASAGGVTVSYFEWVQNNQGYYWSEEEVNEKLREKLEAAFDTIYELSQNRKIDMRLAAYIIGIKRTAEAARYRGWA.

Substrate is bound by residues Lys-70 and Lys-94. Lys-106 (proton donor) is an active-site residue. Positions 190 and 221 each coordinate NAD(+). Ser-348 contributes to the substrate binding site.

It belongs to the Glu/Leu/Phe/Val dehydrogenases family. As to quaternary structure, homohexamer.

It carries out the reaction L-glutamate + NAD(+) + H2O = 2-oxoglutarate + NH4(+) + NADH + H(+). The sequence is that of NAD-specific glutamate dehydrogenase (gluD) from Staphylococcus aureus (strain COL).